Consider the following 361-residue polypeptide: Thermostable alkaline protease (361 aa).

Positions 1 to 24 are cleaved as a signal peptide; sequence MRQSLKVMVLSTVALLFMANPAAA. Positions 25–93 are excised as a propeptide; sequence SEEKKEYLIV…IEKNAEVTIS (69 aa). Gln94 is a binding site for Ca(2+). The Peptidase S8 domain maps to 97–360; that stretch reads PWGISFINTQ…NGLVHAGRAT (264 aa). The Charge relay system role is filled by Asp124. Asp132 is a binding site for Ca(2+). The active-site Charge relay system is His154. Ca(2+)-binding residues include Leu165, Asn167, Ile169, Val171, Ala255, Tyr257, and Val260. Ser307 serves as the catalytic Charge relay system.

It belongs to the peptidase S8 family. The cofactor is Ca(2+).

It localises to the secreted. Shows keratinolytic activity. The sequence is that of Thermostable alkaline protease from Halalkalibacterium halodurans (strain ATCC BAA-125 / DSM 18197 / FERM 7344 / JCM 9153 / C-125) (Bacillus halodurans).